A 161-amino-acid chain; its full sequence is Myosin regulatory light chain A, smooth adductor muscle (161 aa).

Ala1 carries the blocked amino end (Ala) modification. EF-hand domains follow at residues 20-55 (KLMQ…LGRT) and 89-124 (DTEE…MGDN). Residues Asp33, Asn35, Asp37, and Asp44 each coordinate Ca(2+).

Functionally, in molluscan muscle, calcium regulation is associated with myosin rather than with actin. Muscle myosin contains two types of light chains: the catalytic light chain, essential for ATPase activity, and the regulatory light chain, a calcium-binding protein responsible for Ca(2+) dependent binding and Ca(2+) dependent Mg-ATPase activity. The polypeptide is Myosin regulatory light chain A, smooth adductor muscle (Mizuhopecten yessoensis (Japanese scallop)).